A 754-amino-acid chain; its full sequence is MLDTVEHAATTPDQPQPYGELGLKDDEYRRIRQILGRRPTDTELAMYSVMWSEHCSYKSSKVHLRYFGETTSDEMRAAMLAGIGENAGVVDIGDGWAVTFKVESHNHPSYVEPYQGAATGVGGIVRDIMAMGARPVAVMDQLRFGAADAPDTRRVLDGVVRGIGGYGNSLGLPNIGGETVFDPCYAGNPLVNALCVGVLRQEDLHLAFASGAGNKIILFGARTGLDGIGGVSVLASDTFDAEGSRKKLPSVQVGDPFMEKVLIECCLELYAGGLVIGIQDLGGAGLSCATSELASAGDGGMTIQLDSVPLRAKEMTPAEVLCSESQERMCAVVSPKNVDAFLAVCRKWEVLATVIGEVTDGDRLQITWHGETVVDVPPRTVAHEGPVYQRPVARPDTQDALNADRSAKLSRPVTGDELRATLLALLGSPHLCSRAFITEQYDRYVRGNTVLAEHADGGMLRIDESTGRGIAVSTDASGRYTLLDPYAGAQLALAEAYRNVAVTGATPVAVTNCLNFGSPEDPGVMWQFTQAVRGLADGCADLGIPVTGGNVSFYNQTGSAAILPTPVVGVLGVIDDVRRRIPTGLGAEPGETLMLLGDTRDEFDGSVWAQVTADHLGGLPPVVDLAREKLLAAVLSSASRDGLVSAAHDLSEGGLAQAIVESALAGETGCRIVLPEGADPFVLLFSESAGRVLVAVPRTEESRFRGMCEARGLPAVRIGVVDQGSDAVEVQGLFAVSLAELRATSEAVLPRYFG.

Residues 1 to 21 (MLDTVEHAATTPDQPQPYGEL) are disordered. Residue H54 is part of the active site. Positions 57 and 101 each coordinate ATP. Mg(2+) is bound at residue E103. Substrate-binding positions include 104–107 (SHNH) and R126. Catalysis depends on H105, which acts as the Proton acceptor. D127 provides a ligand contact to Mg(2+). Q252 contributes to the substrate binding site. Mg(2+) is bound at residue D280. 324–326 (ESQ) contributes to the substrate binding site. 2 residues coordinate ATP: N512 and G549. Mg(2+) is bound at residue N550. S552 contacts substrate.

It belongs to the FGAMS family. As to quaternary structure, monomer. Part of the FGAM synthase complex composed of 1 PurL, 1 PurQ and 2 PurS subunits.

The protein localises to the cytoplasm. It catalyses the reaction N(2)-formyl-N(1)-(5-phospho-beta-D-ribosyl)glycinamide + L-glutamine + ATP + H2O = 2-formamido-N(1)-(5-O-phospho-beta-D-ribosyl)acetamidine + L-glutamate + ADP + phosphate + H(+). It functions in the pathway purine metabolism; IMP biosynthesis via de novo pathway; 5-amino-1-(5-phospho-D-ribosyl)imidazole from N(2)-formyl-N(1)-(5-phospho-D-ribosyl)glycinamide: step 1/2. Its function is as follows. Part of the phosphoribosylformylglycinamidine synthase complex involved in the purines biosynthetic pathway. Catalyzes the ATP-dependent conversion of formylglycinamide ribonucleotide (FGAR) and glutamine to yield formylglycinamidine ribonucleotide (FGAM) and glutamate. The FGAM synthase complex is composed of three subunits. PurQ produces an ammonia molecule by converting glutamine to glutamate. PurL transfers the ammonia molecule to FGAR to form FGAM in an ATP-dependent manner. PurS interacts with PurQ and PurL and is thought to assist in the transfer of the ammonia molecule from PurQ to PurL. This Mycobacterium bovis (strain ATCC BAA-935 / AF2122/97) protein is Phosphoribosylformylglycinamidine synthase subunit PurL.